The chain runs to 65 residues: Small ribosomal subunit protein uS10 (65 aa).

This sequence belongs to the universal ribosomal protein uS10 family. In terms of assembly, part of the 30S ribosomal subunit.

Functionally, involved in the binding of tRNA to the ribosomes. The polypeptide is Small ribosomal subunit protein uS10 (rps10) (Desulfurococcus mucosus (Desulfurococcus mobilis)).